Consider the following 225-residue polypeptide: Redox-sensing transcriptional repressor Rex (225 aa).

The H-T-H motif DNA-binding region spans I16–F55. G90 to G95 is an NAD(+) binding site.

Belongs to the transcriptional regulatory Rex family. In terms of assembly, homodimer.

It localises to the cytoplasm. In terms of biological role, modulates transcription in response to changes in cellular NADH/NAD(+) redox state. This Lactiplantibacillus plantarum (strain ATCC BAA-793 / NCIMB 8826 / WCFS1) (Lactobacillus plantarum) protein is Redox-sensing transcriptional repressor Rex.